The chain runs to 1343 residues: ABC multidrug transporter atrD (1343 aa).

Polar residues predominate over residues 1–10 (MSPLETNPLS). Positions 1–67 (MSPLETNPLS…HRPKSSSSNN (67 aa)) are disordered. A compositionally biased stretch (low complexity) spans 20–31 (ETSTTEEQASTP). An N-linked (GlcNAc...) asparagine glycan is attached at Asn-99. 4 helical membrane passes run 114–134 (ILIM…LPLF), 163–183 (YFVY…VGFI), 235–255 (KVGL…IAYV), and 263–283 (ICSS…QFII). Positions 115–403 (LIMVISTICA…VSPNAQAFTN (289 aa)) constitute an ABC transmembrane type-1 1 domain. The N-linked (GlcNAc...) asparagine glycan is linked to Asn-309. A run of 2 helical transmembrane segments spans residues 339–359 (IVMG…YGLG) and 366–386 (FLVD…AILI). The region spanning 438–683 (IELRNVKHIY…GGAYRKLVEA (246 aa)) is the ABC transporter 1 domain. 473 to 480 (GPSGSGKS) provides a ligand contact to ATP. N-linked (GlcNAc...) asparagine glycosylation occurs at Asn-545. 2 helical membrane passes run 773 to 793 (MLIG…QAVL) and 820 to 840 (LMFF…GAAF). Positions 774 to 1063 (LIGLVFSVLA…VFSFAPDMGK (290 aa)) constitute an ABC transmembrane type-1 2 domain. Asn-872 carries N-linked (GlcNAc...) asparagine glycosylation. Transmembrane regions (helical) follow at residues 887-907 (HLSG…TTLG), 920-942 (LALV…FYML), 1010-1030 (ALVF…LGHH), and 1037-1057 (FFVC…VFSF). Asn-1083 carries an N-linked (GlcNAc...) asparagine glycan. The ABC transporter 2 domain maps to 1098-1336 (IEFRNVHFRY…KGRYYELVNL (239 aa)). 1133-1140 (GPSGCGKS) provides a ligand contact to ATP.

The protein belongs to the ABC transporter superfamily. ABCB family. Multidrug resistance exporter (TC 3.A.1.201) subfamily.

The protein resides in the cell membrane. Its activity is regulated as follows. Fenamirol efflux transporter activity is inhibited by the cyclosporin derivative PSC 833, nigericin, reserpine and valinomycin. The effect of reserpine is transiant, while that of the cyclosporin derivative PSC 833, nigericin and valinomycin is proportional to the time of exposure. Cyclohexinmide has inhibitory effect only when applied prior to addition of the fungicide. Pleiotropic ABC efflux transporter involved in the protection of the cells against a wide range of toxic compounds. Confers resistance to the azole fenarimol via efflux transport. May also be involved in the secretion of penicillin. The protein is ABC multidrug transporter atrD of Emericella nidulans (strain FGSC A4 / ATCC 38163 / CBS 112.46 / NRRL 194 / M139) (Aspergillus nidulans).